The following is a 351-amino-acid chain: Auxin-responsive protein IAA27 (351 aa).

Residues 1–37 (MMNLISFETPPLGRRSQDGGSSSSSITAATTTTNKAK) form a disordered region. Positions 21 to 34 (SSSSSITAATTTTN) are enriched in low complexity. Residues 233-327 (NMFAKVHMDG…SAKRLYIAKN (95 aa)) form the PB1 domain.

The protein belongs to the Aux/IAA family. In terms of assembly, homodimers and heterodimers. Expressed in roots and seedlings.

It localises to the nucleus. Aux/IAA proteins are short-lived transcriptional factors that function as repressors of early auxin response genes at low auxin concentrations. In Oryza sativa subsp. japonica (Rice), this protein is Auxin-responsive protein IAA27 (IAA27).